The chain runs to 225 residues: Orotate phosphoribosyltransferase (225 aa).

A 5-phospho-alpha-D-ribose 1-diphosphate-binding site is contributed by K32. Residue 40–41 participates in orotate binding; it reads FF. Residues 78–79, R104, K105, K108, H110, and 129–137 contribute to the 5-phospho-alpha-D-ribose 1-diphosphate site; these read YK and DDVISAGTS. Orotate-binding residues include S133 and R161.

Belongs to the purine/pyrimidine phosphoribosyltransferase family. PyrE subfamily. Homodimer. Requires Mg(2+) as cofactor.

The catalysed reaction is orotidine 5'-phosphate + diphosphate = orotate + 5-phospho-alpha-D-ribose 1-diphosphate. Its pathway is pyrimidine metabolism; UMP biosynthesis via de novo pathway; UMP from orotate: step 1/2. Catalyzes the transfer of a ribosyl phosphate group from 5-phosphoribose 1-diphosphate to orotate, leading to the formation of orotidine monophosphate (OMP). This is Orotate phosphoribosyltransferase from Cupriavidus metallidurans (strain ATCC 43123 / DSM 2839 / NBRC 102507 / CH34) (Ralstonia metallidurans).